A 149-amino-acid polypeptide reads, in one-letter code: UPF0178 protein Pmen_0294 (149 aa).

The protein belongs to the UPF0178 family.

In Ectopseudomonas mendocina (strain ymp) (Pseudomonas mendocina), this protein is UPF0178 protein Pmen_0294.